Consider the following 81-residue polypeptide: Short neurotoxin 2 (81 aa).

The first 21 residues, 1 to 21 (MKTLLLTLVVVTIVCLDLGYT), serve as a signal peptide directing secretion. 4 disulfides stabilise this stretch: Cys-24/Cys-43, Cys-38/Cys-60, Cys-62/Cys-73, and Cys-74/Cys-79.

Belongs to the three-finger toxin family. Short-chain subfamily. Type I alpha-neurotoxin sub-subfamily. In terms of tissue distribution, expressed by the venom gland.

The protein localises to the secreted. Its function is as follows. Binds to muscle nicotinic acetylcholine receptor (nAChR) and inhibit acetylcholine from binding to the receptor, thereby impairing neuromuscular transmission. This chain is Short neurotoxin 2, found in Drysdalia coronoides (White-lipped snake).